Consider the following 422-residue polypeptide: S100P-binding protein (422 aa).

Disordered stretches follow at residues 1 to 28 (MMCS…SWSS), 61 to 135 (LKDD…TPAK), and 170 to 292 (YVSE…DSGK). Over residues 80–90 (DDSRNVEKGEK) the composition is skewed to basic and acidic residues. Residue S195 is modified to Phosphoserine. A compositionally biased stretch (basic and acidic residues) spans 231-241 (VSDKNMSDSKK). The span at 255-269 (TPNTGSSRRNGSYKS) shows a compositional bias: polar residues. Low complexity predominate over residues 274–283 (KLPVSSSSSK).

In terms of assembly, interacts with S100P.

It localises to the nucleus. The protein is S100P-binding protein of Bos taurus (Bovine).